The chain runs to 382 residues: Galactokinase (382 aa).

A substrate-binding site is contributed by 34–37; the sequence is EHTD. Position 124 to 130 (124 to 130) interacts with ATP; sequence GAGLSSS. Residues serine 130 and glutamate 162 each contribute to the Mg(2+) site. Aspartate 174 serves as the catalytic Proton acceptor. Position 223 (tyrosine 223) interacts with substrate.

Belongs to the GHMP kinase family. GalK subfamily.

It localises to the cytoplasm. It catalyses the reaction alpha-D-galactose + ATP = alpha-D-galactose 1-phosphate + ADP + H(+). The protein operates within carbohydrate metabolism; galactose metabolism. Its function is as follows. Catalyzes the transfer of the gamma-phosphate of ATP to D-galactose to form alpha-D-galactose-1-phosphate (Gal-1-P). The protein is Galactokinase of Enterobacter sp. (strain 638).